A 163-amino-acid chain; its full sequence is Urease accessory protein UreE (163 aa).

The protein belongs to the UreE family.

The protein resides in the cytoplasm. Functionally, involved in urease metallocenter assembly. Binds nickel. Probably functions as a nickel donor during metallocenter assembly. The chain is Urease accessory protein UreE from Actinomyces naeslundii.